The primary structure comprises 371 residues: MPHQQMLILFGLLPVATNISTWWNFGSMLLACSSMQVLTGFFLAVHYTANINLAFSSIVHITRDVPYGWMMQNLHAIGASMFFICIYIHIARGLYYGSYLNKKTWLSGTTLLIMLMATAFFGYVLPWGQMSFWAATVITNLLTAIPYLGTTMTTWLWGGFAINDPTLTRFFALHFILPFGIISLSSLHIMLLHEDGSSNPLGTNSDIDKIPFHPYHTYKDLLMLSLMVLMLLMTVSFLPDIFNDPENFSKANPLVTPQHIKPEWYFLFAYGILRSILNKLGGALALAMSIMILLTIPFTHTSNIRSMMFRPIMQLMFWTLVATFMVITWAATKPVEPPFTMISQIASTINFLFLIMNPIAGWIENNIMKYN.

Transmembrane regions (helical) follow at residues 25 to 45 (FGSM…FLAV), 69 to 90 (WMMQ…YIHI), 105 to 125 (WLSG…GYVL), and 170 to 190 (FFAL…LHIM). Residues His75 and His89 each contribute to the heme b site. Heme b is bound by residues His174 and His188. His193 is a binding site for a ubiquinone. Helical transmembrane passes span 218–238 (YKDL…VSFL), 280–300 (LGGA…PFTH), 312–332 (IMQL…WAAT), and 339–358 (FTMI…IMNP).

Belongs to the cytochrome b family. In terms of assembly, the cytochrome bc1 complex contains 3 respiratory subunits (MT-CYB, CYC1 and UQCRFS1), 2 core proteins (UQCRC1 and UQCRC2) and probably 6 low-molecular weight proteins. Heme b serves as cofactor.

It localises to the mitochondrion inner membrane. Component of the ubiquinol-cytochrome c reductase complex (complex III or cytochrome b-c1 complex) that is part of the mitochondrial respiratory chain. The b-c1 complex mediates electron transfer from ubiquinol to cytochrome c. Contributes to the generation of a proton gradient across the mitochondrial membrane that is then used for ATP synthesis. This Eryx miliaris (Desert sand boa) protein is Cytochrome b (MT-CYB).